Here is a 392-residue protein sequence, read N- to C-terminus: Phosphoglycerate kinase (392 aa).

Residues 21-23, R36, 59-62, R117, and R150 contribute to the substrate site; these read DFN and HLGR. ATP-binding positions include K200, G288, E319, and 345-348; that span reads GGDS.

Belongs to the phosphoglycerate kinase family. As to quaternary structure, monomer.

The protein resides in the cytoplasm. It carries out the reaction (2R)-3-phosphoglycerate + ATP = (2R)-3-phospho-glyceroyl phosphate + ADP. It participates in carbohydrate degradation; glycolysis; pyruvate from D-glyceraldehyde 3-phosphate: step 2/5. The sequence is that of Phosphoglycerate kinase from Rubrobacter xylanophilus (strain DSM 9941 / JCM 11954 / NBRC 16129 / PRD-1).